The primary structure comprises 350 residues: Very-long-chain 3-oxoacyl-CoA reductase (350 aa).

Residues 20–40 (ALLFSLLFGVFKLTTFTLRFA) form a helical membrane-spanning segment. Residues valine 66, aspartate 120, asparagine 147, tyrosine 221, lysine 225, valine 254, and serine 256 each contribute to the NADP(+) site. The Proton donor role is filled by tyrosine 221. Lysine 225 acts as the Lowers pKa of active site Tyr in catalysis.

The protein belongs to the short-chain dehydrogenases/reductases (SDR) family.

The protein resides in the endoplasmic reticulum membrane. It carries out the reaction a very-long-chain (3R)-3-hydroxyacyl-CoA + NADP(+) = a very-long-chain 3-oxoacyl-CoA + NADPH + H(+). It functions in the pathway lipid metabolism; fatty acid biosynthesis. In terms of biological role, component of the microsomal membrane bound fatty acid elongation system, which produces the 26-carbon very long-chain fatty acids (VLCFA) from palmitate. Catalyzes the reduction of the 3-ketoacyl-CoA intermediate that is formed in each cycle of fatty acid elongation. VLCFAs serve as precursors for ceramide and sphingolipids. The protein is Very-long-chain 3-oxoacyl-CoA reductase of Lodderomyces elongisporus (strain ATCC 11503 / CBS 2605 / JCM 1781 / NBRC 1676 / NRRL YB-4239) (Yeast).